The chain runs to 310 residues: tRNA dimethylallyltransferase 2 (310 aa).

15–22 (GPTASGKT) lines the ATP pocket. Substrate is bound at residue 17-22 (TASGKT). An interaction with substrate tRNA region spans residues 40-43 (DSMQ).

Belongs to the IPP transferase family. In terms of assembly, monomer. Requires Mg(2+) as cofactor.

The enzyme catalyses adenosine(37) in tRNA + dimethylallyl diphosphate = N(6)-dimethylallyladenosine(37) in tRNA + diphosphate. Its function is as follows. Catalyzes the transfer of a dimethylallyl group onto the adenine at position 37 in tRNAs that read codons beginning with uridine, leading to the formation of N6-(dimethylallyl)adenosine (i(6)A). The polypeptide is tRNA dimethylallyltransferase 2 (Geotalea uraniireducens (strain Rf4) (Geobacter uraniireducens)).